The following is a 1134-amino-acid chain: Protocadherin-18 (1134 aa).

Positions 1–27 (MYQMNAKMHFTFVFALLVVSFNLDVLG) are cleaved as a signal peptide. 6 Cadherin domains span residues 28-137 (KNLK…SPQF), 138-246 (SRSL…SPAF), 247-354 (EQQS…KPEI), 361-465 (PGKE…PPHF), 466-576 (QRSR…VPVV), and 582-697 (RNNT…APLD). At 28-699 (KNLKYRIYEE…SVSQAPLDVS (672 aa)) the chain is on the extracellular side. N-linked (GlcNAc...) asparagine glycosylation is present at Asn103. N-linked (GlcNAc...) asparagine glycosylation is present at Asn269. Residue Asn559 is glycosylated (N-linked (GlcNAc...) asparagine). A helical transmembrane segment spans residues 700 to 720 (MIIIISLGAICAVLLVIMVLF). Over 721–1134 (ATRCNREKKD…NKLLQDVRQS (414 aa)) the chain is Cytoplasmic. Disordered stretches follow at residues 768-800 (TLPI…NSHQ), 868-888 (SLKD…DLGR), and 941-1003 (DYRS…TSSL). Polar residues predominate over residues 791–800 (GSRQSHNSHQ). Residues 868–877 (SLKDSGRGDS) show a composition bias toward basic and acidic residues. Residues 892–1134 (IDRLLGEGFS…NKLLQDVRQS (243 aa)) are interaction with DAB1.

Interacts with DAB1.

It is found in the cell membrane. Functionally, potential calcium-dependent cell-adhesion protein. The chain is Protocadherin-18 (PCDH18) from Bos taurus (Bovine).